Consider the following 171-residue polypeptide: Sec-independent protein translocase protein TatB (171 aa).

Residues 1 to 21 (MFDIGFSELLLVFIIGLVVLG) form a helical membrane-spanning segment. The segment at 89–171 (AESMKRSYVA…APSPSSSDKP (83 aa)) is disordered. The span at 100-123 (DPEKASDEAHTIHNPVVKDNETAH) shows a compositional bias: basic and acidic residues. A compositionally biased stretch (polar residues) spans 130–139 (AAQTQASSPE).

The protein belongs to the TatB family. As to quaternary structure, the Tat system comprises two distinct complexes: a TatABC complex, containing multiple copies of TatA, TatB and TatC subunits, and a separate TatA complex, containing only TatA subunits. Substrates initially bind to the TatABC complex, which probably triggers association of the separate TatA complex to form the active translocon.

It is found in the cell inner membrane. Its function is as follows. Part of the twin-arginine translocation (Tat) system that transports large folded proteins containing a characteristic twin-arginine motif in their signal peptide across membranes. Together with TatC, TatB is part of a receptor directly interacting with Tat signal peptides. TatB may form an oligomeric binding site that transiently accommodates folded Tat precursor proteins before their translocation. This is Sec-independent protein translocase protein TatB from Escherichia coli O1:K1 / APEC.